A 153-amino-acid polypeptide reads, in one-letter code: Arginine repressor (153 aa).

Belongs to the ArgR family.

Its subcellular location is the cytoplasm. It participates in amino-acid biosynthesis; L-arginine biosynthesis [regulation]. Its function is as follows. Regulates arginine biosynthesis genes. The polypeptide is Arginine repressor (Glaesserella parasuis serovar 5 (strain SH0165) (Haemophilus parasuis)).